The sequence spans 257 residues: Protein MoaE (257 aa).

Residue 6–29 (VITGGGTGIGAACARLMHPAGERV) coordinates NAD(+). Residues 75 to 96 (LMSSSAAPAGWATAPPPRPATA) are disordered. Substrate is bound at residue Ser-132. Tyr-145 functions as the Proton acceptor in the catalytic mechanism.

This sequence belongs to the short-chain dehydrogenases/reductases (SDR) family.

Functionally, might catalyze the conversion of monoamine compounds or their metabolites. This chain is Protein MoaE (moaE), found in Klebsiella aerogenes (Enterobacter aerogenes).